A 354-amino-acid polypeptide reads, in one-letter code: Gibberellin receptor GID1 (354 aa).

An Involved in the stabilization of the negatively charged intermediate by the formation of the oxyanion hole motif is present at residues His120 to Gly122. Residues Gly122–Ser123, Tyr134, Ser198, and Asp250 each bind gibberellin A3. Residues Gly122–Ser123, Tyr134, and Ser198 each bind gibberellin A4. Residue Ser198 is part of the active site. Asp296 is an active-site residue. Gly327 contacts gibberellin A3. Position 327 (Gly327) interacts with gibberellin A4.

It belongs to the 'GDXG' lipolytic enzyme family. As to quaternary structure, interacts with the DELLA protein SLR1 in a GA-dependent manner, resulting in subsequent SLR1 degradation.

The protein localises to the nucleus. Functionally, functions as a soluble gibberellin (GA) receptor. GA is an essential hormone that regulates growth and development in plants. Binds with high affinity the biologically active GAs such as GA1, GA3 and GA4, but has low or no affinity for the biologically inactive GAs. Upon GA-binding, it interacts with the DELLA protein SLR1, a repressor of GA signaling. This leads to SLR1 degradation by the proteasome, allowing the GA signaling pathway. The polypeptide is Gibberellin receptor GID1 (Oryza sativa subsp. japonica (Rice)).